Reading from the N-terminus, the 339-residue chain is Cathepsin B (339 aa).

The N-terminal stretch at 1-17 is a signal peptide; the sequence is MWQLWASLCCLLVLANA. The propeptide at 18–79 is activation peptide; that stretch reads RSRPSFHPLS…QRVMFTEDLK (62 aa). 6 cysteine pairs are disulfide-bonded: cysteine 93/cysteine 122, cysteine 105/cysteine 150, cysteine 141/cysteine 207, cysteine 142/cysteine 146, cysteine 179/cysteine 211, and cysteine 187/cysteine 198. Cysteine 108 is an active-site residue. N-linked (GlcNAc...) asparagine glycosylation is present at asparagine 192. Lysine 220 is modified (N6-acetyllysine). Catalysis depends on residues histidine 278 and asparagine 298. The propeptide occupies 334–339; sequence QYWEKI.

The protein belongs to the peptidase C1 family. Dimer of a heavy chain and a light chain cross-linked by a disulfide bond. Interacts with SRPX2. Directly interacts with SHKBP1. Expressed in the stratum spinosum of the epidermis. Weak expression is detected in the stratum granulosum.

It is found in the lysosome. It localises to the melanosome. The protein localises to the secreted. The protein resides in the extracellular space. Its subcellular location is the apical cell membrane. The catalysed reaction is Hydrolysis of proteins with broad specificity for peptide bonds. Preferentially cleaves -Arg-Arg-|-Xaa bonds in small molecule substrates (thus differing from cathepsin L). In addition to being an endopeptidase, shows peptidyl-dipeptidase activity, liberating C-terminal dipeptides.. Its activity is regulated as follows. Inhibited by leupeptin. In terms of biological role, thiol protease which is believed to participate in intracellular degradation and turnover of proteins. Cleaves matrix extracellular phosphoglycoprotein MEPE. Involved in the solubilization of cross-linked TG/thyroglobulin in the thyroid follicle lumen. Has also been implicated in tumor invasion and metastasis. This is Cathepsin B (CTSB) from Homo sapiens (Human).